A 124-amino-acid chain; its full sequence is Fluoride-specific ion channel FluC (124 aa).

4 helical membrane-spanning segments follow: residues 4–24, 32–52, 67–87, and 101–121; these read VLYIAVFGALGCLSRYYLSGW, AFPYGTFAVNIVGAFCIGLIM, IGLTIGFLGGLTTFSTFSYET, and ANVLFSVMTCLVFTWLGIIVA. Positions 75 and 78 each coordinate Na(+).

This sequence belongs to the fluoride channel Fluc/FEX (TC 1.A.43) family.

The protein localises to the cell inner membrane. It catalyses the reaction fluoride(in) = fluoride(out). Na(+) is not transported, but it plays an essential structural role and its presence is essential for fluoride channel function. In terms of biological role, fluoride-specific ion channel. Important for reducing fluoride concentration in the cell, thus reducing its toxicity. This chain is Fluoride-specific ion channel FluC, found in Geotalea uraniireducens (strain Rf4) (Geobacter uraniireducens).